The sequence spans 274 residues: Probable cyclic nucleotide phosphodiesterase RPA0124 (274 aa).

The Fe cation site is built by Asp8, His10, Asp49, Asn79, His155, His194, and His196. AMP-binding positions include His10, Asp49, and 79-80; that span reads NH. Position 196 (His196) interacts with AMP.

The protein belongs to the cyclic nucleotide phosphodiesterase class-III family. Requires Fe(2+) as cofactor.

In Rhodopseudomonas palustris (strain ATCC BAA-98 / CGA009), this protein is Probable cyclic nucleotide phosphodiesterase RPA0124.